Consider the following 63-residue polypeptide: Large ribosomal subunit protein uL29 (63 aa).

It belongs to the universal ribosomal protein uL29 family.

This is Large ribosomal subunit protein uL29 from Vibrio campbellii (strain ATCC BAA-1116).